A 288-amino-acid polypeptide reads, in one-letter code: NAD(P)H-hydrate epimerase (288 aa).

Residues 1 to 47 (MSRLRALLGLGLLVAGSRVPRIKSQTIACRSGPTWWGPQRLNSGGRW) constitute a mitochondrion transit peptide. S49 carries the phosphoserine modification. The 211-residue stretch at 65–275 (AQAVDQELFN…ALEKKYQLNL (211 aa)) folds into the YjeF N-terminal domain. 119–123 (NNGGD) serves as a coordination point for (6S)-NADPHX. Residue N120 participates in K(+) binding. An N6-succinyllysine modification is found at K144. D185 lines the K(+) pocket. (6S)-NADPHX contacts are provided by residues 189-195 (GFSFKGD) and D218. S221 lines the K(+) pocket.

Belongs to the NnrE/AIBP family. In terms of assembly, homodimer. Interacts with APOA1 and APOA2. Requires K(+) as cofactor. Undergoes physiological phosphorylation during sperm capacitation, downstream to PKA activation. As to expression, ubiquitously expressed, with highest levels in kidney, heart and liver. Present in cerebrospinal fluid and urine but not in serum from healthy patients. Present in serum of sepsis patients (at protein level).

The protein resides in the mitochondrion. It localises to the secreted. It catalyses the reaction (6R)-NADHX = (6S)-NADHX. The enzyme catalyses (6R)-NADPHX = (6S)-NADPHX. Functionally, catalyzes the epimerization of the S- and R-forms of NAD(P)HX, a damaged form of NAD(P)H that is a result of enzymatic or heat-dependent hydration. This is a prerequisite for the S-specific NAD(P)H-hydrate dehydratase to allow the repair of both epimers of NAD(P)HX. Accelerates cholesterol efflux from endothelial cells to high-density lipoprotein (HDL) and thereby regulates angiogenesis. This is NAD(P)H-hydrate epimerase from Homo sapiens (Human).